We begin with the raw amino-acid sequence, 445 residues long: UNC93-like protein MFSD11 (445 aa).

Residues 8–28 form a helical membrane-spanning segment; it reads LLNIVILGVGFMFMFTAFQTS. A glycan (N-linked (GlcNAc...) asparagine) is linked at Asn-40. 4 helical membrane-spanning segments follow: residues 52-72, 74-94, 98-118, and 138-158; these read LAII…VIAV, GCQM…AMFI, TWSF…LWTA, and IFWA…YLAW. A glycan (N-linked (GlcNAc...) asparagine) is linked at Asn-163. 7 helical membrane passes run 170-190, 239-259, 277-297, 309-329, 343-363, 385-405, and 415-435; these read RTVF…FFLI, MLLL…YSGV, LIGL…GLFG, PVVI…YLYM, LSAF…LLGL, APAF…AFFY, and LLIL…VEWG.

It belongs to the unc-93 family.

It is found in the membrane. The chain is UNC93-like protein MFSD11 (mfsd11) from Xenopus laevis (African clawed frog).